The sequence spans 260 residues: Global transcriptional regulator CodY (260 aa).

The interval 1-159 (MPNLLQKTRK…SSTVVGIQLL (159 aa)) is GAF domain. A DNA-binding region (H-T-H motif) is located at residues 207–226 (ASVIADRIGITRSVIVNALR).

This sequence belongs to the CodY family.

The protein resides in the cytoplasm. In terms of biological role, DNA-binding global transcriptional regulator which is involved in the adaptive response to starvation and acts by directly or indirectly controlling the expression of numerous genes in response to nutrient availability. During rapid exponential growth, CodY is highly active and represses genes whose products allow adaptation to nutrient depletion. The polypeptide is Global transcriptional regulator CodY (Streptococcus equi subsp. zooepidemicus (strain MGCS10565)).